A 330-amino-acid polypeptide reads, in one-letter code: 5'-AMP-activated protein kinase subunit gamma-1 (330 aa).

The segment covering 1–13 (METVTSSDSSSAV) has biased composition (polar residues). A disordered region spans residues 1-26 (METVTSSDSSSAVENEHPQDTPESNN). CBS domains are found at residues 43 to 103 (PTSS…KSAL), 125 to 187 (SFKP…PKPE), and 198 to 260 (IGTY…NLDV). ADP-binding positions include Arg-70, 85–90 (MLTITD), Val-130, 151–152 (HR), and Lys-170. AMP is bound by residues Arg-70, 85–90 (MLTITD), Val-130, His-151, 151–152 (HR), Lys-170, Thr-200, Ala-205, 226–227 (SA), and 242–245 (SKFD). Residues Arg-70, 85–90 (MLTITD), Val-130, 151–152 (HR), Arg-152, and Lys-170 contribute to the ATP site. The AMPK pseudosubstrate signature appears at 138–159 (LFDAVSSLIRNKIHRLPVIDPE). An ADP-binding site is contributed by 242 to 245 (SKFD). 242–245 (SKFD) provides a ligand contact to ATP. Ser-261 carries the post-translational modification Phosphoserine; by ULK1. A Phosphothreonine; by ULK1 modification is found at Thr-263. Arg-269 is an ADP binding site. Residue Arg-269 coordinates AMP. Arg-269 lines the ATP pocket. Ser-270 carries the post-translational modification Phosphoserine; by ULK1. Residues 272 to 329 (YFEGVLKCYLHETLETIINRLVEAEVHRLVVVDENDVVKGIVSLSDILQALVLTGGEK) form the CBS 4 domain. ADP is bound by residues Leu-277 and 298–299 (HR). Residues Leu-277, His-298, 298–299 (HR), and 314–317 (SLSD) each bind AMP. Residues Leu-277 and 298–299 (HR) each bind ATP.

The protein belongs to the 5'-AMP-activated protein kinase gamma subunit family. As to quaternary structure, AMPK is a heterotrimer of an alpha catalytic subunit (PRKAA1 or PRKAA2), a beta (PRKAB1 or PRKAB2) and a gamma non-catalytic subunits (PRKAG1, PRKAG2 or PRKAG3). Interacts with FNIP1 and FNIP2. In terms of processing, phosphorylated by ULK1 and ULK2; leading to negatively regulate AMPK activity and suggesting the existence of a regulatory feedback loop between ULK1, ULK2 and AMPK. Glycosylated; O-GlcNAcylated by OGT, promoting the AMP-activated protein kinase (AMPK) activity.

Functionally, AMP/ATP-binding subunit of AMP-activated protein kinase (AMPK), an energy sensor protein kinase that plays a key role in regulating cellular energy metabolism. In response to reduction of intracellular ATP levels, AMPK activates energy-producing pathways and inhibits energy-consuming processes: inhibits protein, carbohydrate and lipid biosynthesis, as well as cell growth and proliferation. AMPK acts via direct phosphorylation of metabolic enzymes, and by longer-term effects via phosphorylation of transcription regulators. Also acts as a regulator of cellular polarity by remodeling the actin cytoskeleton; probably by indirectly activating myosin. Gamma non-catalytic subunit mediates binding to AMP, ADP and ATP, leading to activate or inhibit AMPK: AMP-binding results in allosteric activation of alpha catalytic subunit (PRKAA1 or PRKAA2) both by inducing phosphorylation and preventing dephosphorylation of catalytic subunits. ADP also stimulates phosphorylation, without stimulating already phosphorylated catalytic subunit. ATP promotes dephosphorylation of catalytic subunit, rendering the AMPK enzyme inactive. This is 5'-AMP-activated protein kinase subunit gamma-1 (PRKAG1) from Sus scrofa (Pig).